A 1405-amino-acid polypeptide reads, in one-letter code: DNA-directed RNA polymerase subunit beta' (1405 aa).

4 residues coordinate Zn(2+): Cys70, Cys72, Cys85, and Cys88. Mg(2+) contacts are provided by Asp460, Asp462, and Asp464. 4 residues coordinate Zn(2+): Cys815, Cys889, Cys896, and Cys899. A disordered region spans residues 1363 to 1388 (LAHHAERRRRREDPESTANPSAFDVE).

It belongs to the RNA polymerase beta' chain family. The RNAP catalytic core consists of 2 alpha, 1 beta, 1 beta' and 1 omega subunit. When a sigma factor is associated with the core the holoenzyme is formed, which can initiate transcription. The cofactor is Mg(2+). Requires Zn(2+) as cofactor.

It catalyses the reaction RNA(n) + a ribonucleoside 5'-triphosphate = RNA(n+1) + diphosphate. In terms of biological role, DNA-dependent RNA polymerase catalyzes the transcription of DNA into RNA using the four ribonucleoside triphosphates as substrates. The chain is DNA-directed RNA polymerase subunit beta' from Chromohalobacter salexigens (strain ATCC BAA-138 / DSM 3043 / CIP 106854 / NCIMB 13768 / 1H11).